Reading from the N-terminus, the 134-residue chain is Ribonuclease VapC40 (134 aa).

Positions 3–126 (APDTSVLVAG…LRAVETYERL (124 aa)) constitute a PINc domain. Residues D5 and D98 each contribute to the Mg(2+) site.

This sequence belongs to the PINc/VapC protein family. Requires Mg(2+) as cofactor.

Its function is as follows. Toxic component of a type II toxin-antitoxin (TA) system. An RNase. Its cognate antitoxin is VapB40. The polypeptide is Ribonuclease VapC40 (Mycobacterium tuberculosis (strain CDC 1551 / Oshkosh)).